The chain runs to 419 residues: UDP-N-acetylglucosamine 1-carboxyvinyltransferase 2 (419 aa).

Phosphoenolpyruvate is bound at residue 22 to 23 (KN). Residue Arg-92 participates in UDP-N-acetyl-alpha-D-glucosamine binding. The active-site Proton donor is Cys-116. 2-(S-cysteinyl)pyruvic acid O-phosphothioketal is present on Cys-116. UDP-N-acetyl-alpha-D-glucosamine-binding positions include 121–125 (RPIDL), Asp-306, and Val-328.

Belongs to the EPSP synthase family. MurA subfamily.

Its subcellular location is the cytoplasm. The catalysed reaction is phosphoenolpyruvate + UDP-N-acetyl-alpha-D-glucosamine = UDP-N-acetyl-3-O-(1-carboxyvinyl)-alpha-D-glucosamine + phosphate. The protein operates within cell wall biogenesis; peptidoglycan biosynthesis. Functionally, cell wall formation. Adds enolpyruvyl to UDP-N-acetylglucosamine. The polypeptide is UDP-N-acetylglucosamine 1-carboxyvinyltransferase 2 (Carboxydothermus hydrogenoformans (strain ATCC BAA-161 / DSM 6008 / Z-2901)).